We begin with the raw amino-acid sequence, 130 residues long: Protein ApaG (130 aa).

The region spanning 3 to 127 (RAVTRRIEVT…FSLDSPEGKR (125 aa)) is the ApaG domain.

The sequence is that of Protein ApaG from Rhodopseudomonas palustris (strain ATCC BAA-98 / CGA009).